We begin with the raw amino-acid sequence, 221 residues long: Iron-sulfur cluster repair protein YtfE (221 aa).

Belongs to the RIC family. YtfE subfamily. In terms of assembly, homodimer.

Its subcellular location is the cytoplasm. Di-iron-containing protein involved in the repair of iron-sulfur clusters damaged by oxidative and nitrosative stress conditions. This chain is Iron-sulfur cluster repair protein YtfE, found in Edwardsiella ictaluri (strain 93-146).